The sequence spans 703 residues: Polyribonucleotide nucleotidyltransferase (703 aa).

Residues aspartate 485 and aspartate 491 each coordinate Mg(2+). One can recognise a KH domain in the interval 552 to 611; it reads PRAYTINIDTDKIRTLIGTGGKTINKIIEETGVKIDIREDGTVFVLSSDADSANRALKMI. The region spanning 621–689 is the S1 motif domain; that stretch reads GEVYLGKVTK…NQGRVNLSRK (69 aa).

It belongs to the polyribonucleotide nucleotidyltransferase family. Requires Mg(2+) as cofactor.

The protein resides in the cytoplasm. The catalysed reaction is RNA(n+1) + phosphate = RNA(n) + a ribonucleoside 5'-diphosphate. In terms of biological role, involved in mRNA degradation. Catalyzes the phosphorolysis of single-stranded polyribonucleotides processively in the 3'- to 5'-direction. The sequence is that of Polyribonucleotide nucleotidyltransferase from Clostridium acetobutylicum (strain ATCC 824 / DSM 792 / JCM 1419 / IAM 19013 / LMG 5710 / NBRC 13948 / NRRL B-527 / VKM B-1787 / 2291 / W).